The chain runs to 439 residues: Adenylosuccinate synthetase (439 aa).

Residues 25–31 (GDEGKGK), 53–55 (GHT), and K62 contribute to the GTP site. D26 serves as the catalytic Proton acceptor. 2 residues coordinate Mg(2+): D26 and G53. Residues 26–29 (DEGK) and 51–54 (NAGH) contribute to the IMP site. The active-site Proton donor is H54. IMP is bound by residues T141, R155, N232, and T247. T307 lines the GTP pocket. Substrate is bound at residue 307–313 (TTTNRPR). R311 is an IMP binding site. Residues R313, 339–341 (KLD), and 425–427 (GVG) contribute to the GTP site.

Belongs to the adenylosuccinate synthetase family. As to quaternary structure, homodimer. It depends on Mg(2+) as a cofactor.

The protein localises to the cytoplasm. The enzyme catalyses IMP + L-aspartate + GTP = N(6)-(1,2-dicarboxyethyl)-AMP + GDP + phosphate + 2 H(+). Its pathway is purine metabolism; AMP biosynthesis via de novo pathway; AMP from IMP: step 1/2. Plays an important role in the salvage pathway for purine nucleotide biosynthesis. Catalyzes the first committed step in the biosynthesis of AMP from IMP. The chain is Adenylosuccinate synthetase from Plasmodium yoelii yoelii.